The primary structure comprises 1044 residues: MSYVKRIRQPIIAVLGHVDHGKCLLPEERVILPDYGPITLEELFNMTKETVFKDEEKEVRKLGIRMPVAGVDGRVRLLEGPYVWKVRYKGKMLRVKLKDWHSVAVTPEHPFLTTRGWVRADQLKPGDYVAVPKILPGKDDKEKFLQYVHEKLKGKVHIKLPSSDEEWETFFYFAGTIFGRENSVNPEGLTHEVKALLELFKVLFEYPREVLRVLFMAPVRYVANFLRGFFDINGYVNGEELRVEVRGAPHEVLEELSLILLRLGIVSKIYPTSLAISGRRNLELFRRYIGFSEKQKAKELEGIIRRSENSESYPIFEELRRIRLLFGFTRAELSSTIPLYSKYESKEAPSYEILMKILNTIEKGSKDLNKKITILEGRVRDHEYIEEFKREGLIKDGKLTELGKELLEVWRNREFDSRDVNYLRNIIENFVFLPVEKIEEFEYDGYVYDVTTETHNFIANGILVHNTTLLDKIRKTNVAAKEAGGITQHIGATEVPIDVVKKIAGPLIKLWKAEIRLPGLLFIDTPGHEAFTSLRARGGSLADLAVLVIDVNEGFQPQTIESIEILRRYRTPFVVAANKIDRIRGWVIEEDEPFLMNIKRQDQRAIQELETKLWELIGKFYEFGFQANRFDRVQNFTRELAIVPISAKYGIGIAELLVLIAGLSQKYLEEKLKIEVEGPARGTILEVREEPGLGHTIDVIIYDGTLHKDDTIVVGGKDKAIVTKVRALLKPKPLDEIRDPRFRFDYVDEVTAAAGVKIAAPGLEEALAGSPVIAAPTPEDVERAKEEIMRQIESVVISTDKVGVIVKADTLGSLEALSKELQEKEIPIRKADVGNISKTDVMEALSVKEENPKYGVILGFNVKVNEDAKEVAKAKEVPIFVGNIIYKLIEDYEAWIKEEEEKRKRELLAKVTFPGVIKLYPDERYVFRRSNPAIVGIEVLEGRIKPGVTLIKQNGQKVGTIRSIKSRDEFLQEARKGQAVAIAIEGAIVGRHIHPGETLYVDLSRDDAIILLKHLRDVLEDTDIKALKMIAQVKAKEDPFWRAV.

One can recognise a DOD-type homing endonuclease domain in the interval 173 to 265 (FAGTIFGREN…LSLILLRLGI (93 aa)). Residues 451–668 (TTETHNFIAN…LIAGLSQKYL (218 aa)) form the tr-type G domain. GTP is bound by residues 524-528 (DTPGH) and 578-581 (NKID).

It belongs to the TRAFAC class translation factor GTPase superfamily. Classic translation factor GTPase family. IF-2 subfamily. Post-translationally, this protein undergoes a protein self splicing that involves a post-translational excision of the intervening region (intein) followed by peptide ligation.

Function in general translation initiation by promoting the binding of the formylmethionine-tRNA to ribosomes. Seems to function along with eIF-2. In Pyrococcus horikoshii (strain ATCC 700860 / DSM 12428 / JCM 9974 / NBRC 100139 / OT-3), this protein is Probable translation initiation factor IF-2 (infB).